We begin with the raw amino-acid sequence, 316 residues long: Aspartate carbamoyltransferase catalytic subunit (316 aa).

Carbamoyl phosphate is bound by residues Arg58 and Thr59. An L-aspartate-binding site is contributed by Lys86. Positions 108, 136, and 139 each coordinate carbamoyl phosphate. Residues Arg169 and Arg223 each contribute to the L-aspartate site. Gly265 and Pro266 together coordinate carbamoyl phosphate.

This sequence belongs to the aspartate/ornithine carbamoyltransferase superfamily. ATCase family. Heterododecamer (2C3:3R2) of six catalytic PyrB chains organized as two trimers (C3), and six regulatory PyrI chains organized as three dimers (R2).

It carries out the reaction carbamoyl phosphate + L-aspartate = N-carbamoyl-L-aspartate + phosphate + H(+). It functions in the pathway pyrimidine metabolism; UMP biosynthesis via de novo pathway; (S)-dihydroorotate from bicarbonate: step 2/3. Catalyzes the condensation of carbamoyl phosphate and aspartate to form carbamoyl aspartate and inorganic phosphate, the committed step in the de novo pyrimidine nucleotide biosynthesis pathway. The protein is Aspartate carbamoyltransferase catalytic subunit of Anaeromyxobacter sp. (strain Fw109-5).